A 194-amino-acid polypeptide reads, in one-letter code: Imidazoleglycerol-phosphate dehydratase (194 aa).

It belongs to the imidazoleglycerol-phosphate dehydratase family.

It is found in the cytoplasm. The enzyme catalyses D-erythro-1-(imidazol-4-yl)glycerol 3-phosphate = 3-(imidazol-4-yl)-2-oxopropyl phosphate + H2O. Its pathway is amino-acid biosynthesis; L-histidine biosynthesis; L-histidine from 5-phospho-alpha-D-ribose 1-diphosphate: step 6/9. The chain is Imidazoleglycerol-phosphate dehydratase from Methanothermobacter thermautotrophicus (strain ATCC 29096 / DSM 1053 / JCM 10044 / NBRC 100330 / Delta H) (Methanobacterium thermoautotrophicum).